A 376-amino-acid polypeptide reads, in one-letter code: Alanine racemase (376 aa).

The Proton acceptor; specific for D-alanine role is filled by K36. The residue at position 36 (K36) is an N6-(pyridoxal phosphate)lysine. R134 is a substrate binding site. The Proton acceptor; specific for L-alanine role is filled by Y266. M314 serves as a coordination point for substrate.

The protein belongs to the alanine racemase family. The cofactor is pyridoxal 5'-phosphate.

The catalysed reaction is L-alanine = D-alanine. It participates in amino-acid biosynthesis; D-alanine biosynthesis; D-alanine from L-alanine: step 1/1. Its function is as follows. Catalyzes the interconversion of L-alanine and D-alanine. May also act on other amino acids. The protein is Alanine racemase (alr) of Nitratidesulfovibrio vulgaris (strain ATCC 29579 / DSM 644 / CCUG 34227 / NCIMB 8303 / VKM B-1760 / Hildenborough) (Desulfovibrio vulgaris).